Reading from the N-terminus, the 1030-residue chain is MSTEGSGPVRFPAMEDAVLERWEKEKTFEQSISAREGKPVYVFYDGPPFATGLPHYGHILTSYIKDVIPRYQTMLGKQVPRRWGWDCHGLPVEFEVEKAMGFKSKRDILEFGVEQFNDECRELVLKYADDWRGFVNRMGRWVDFDGAYKTMDNDYMESVLWGFKTLHDKGHVYEGGKIVPYCVRCQTVLSNFEARLDDAFRPRRDMSAYVKFRQQDRPDTFFLAWTTTPWTLPANVALAVAADENYVCIEHGEERLWLAEGCLGGLFDEPVILERCTGAELAGLRYLPVVGEVIDASAHRVVTADFVQMGDGSGIVHIAPAFGEDDALLGQQYELPAPNPVRDDGTFSDAVAQYAGQNIFEATPRILADLKSSGLLFKQEQIEHNYPHCWRCDNPLIYRAVESWFIRASALREQLVENNSQVNWVPEHVKEGRFGDWIRNARDWAVSRNRFWGAPIPVWRCDQCGTVEVMGSIAQIEARSGRKVEDLHVPHIDEHRFACQCCEGTMSRVTGVFDCWFESGAMPFASRHYPFENKQEFEQTFPADFIVEYLAQTRGWFYTMMVISTGCFEQNPFKNAMCHGVILAKDGRKMSKRLKNYPNPMDLMQTHGSDALRVALLASPVCKGEDIKFSEESVRDVVRRYHLLFWNCLQFYKTFTEIDQFSPSGDLGQPLDNVLDHYLLHELAALESDIKMWMESLDFSKIYSRIEVFINVLSTWYLRLNKARIWRDGLDDDKRQCYEVLHYALSNFARLLAPFMPFLAEAVYTELGYADSVHLQDWPSIDRQYLSYELADEMSSLRNLIASVRNVRETNGVSQKFPLRSIRVAGIEQAVLERYAQFLEEELNVKQVQWAADADEWAQPVVVLIFSLLGKRLGPAMKAVTTAVKAGEYVIDEQGGLVAAGQTIQPHEFERRLTVRDTLNNVGIVENMVVWLDLDIDASLKREGAVRELNRRLQDLRKKAKLGYTEKVDIAVLGGAYVDEILVHHEDWLKSQLLVQSLLRSDLEAPLAVDEVELPEGDPVRIQLRRSVLA.

The short motif at 48–58 is the 'HIGH' region element; it reads PFATGLPHYGH. The 'KMSKS' region motif lies at 589–593; sequence KMSKR. Residue Lys592 participates in ATP binding.

The protein belongs to the class-I aminoacyl-tRNA synthetase family. IleS type 2 subfamily. In terms of assembly, monomer. The cofactor is Zn(2+).

It localises to the cytoplasm. The enzyme catalyses tRNA(Ile) + L-isoleucine + ATP = L-isoleucyl-tRNA(Ile) + AMP + diphosphate. Functionally, catalyzes the attachment of isoleucine to tRNA(Ile). As IleRS can inadvertently accommodate and process structurally similar amino acids such as valine, to avoid such errors it has two additional distinct tRNA(Ile)-dependent editing activities. One activity is designated as 'pretransfer' editing and involves the hydrolysis of activated Val-AMP. The other activity is designated 'posttransfer' editing and involves deacylation of mischarged Val-tRNA(Ile). Confers high-level resistance to the antibiotic mupirocin (pseudomonic acid A), an Ile-analog produced by P.fluorescens NCIMB 10586 itself that competitively inhibits activation by Ile-tRNA synthetase, thus inhibiting protein biosynthesis. The chain is Isoleucine--tRNA ligase 2 (ileS2) from Pseudomonas fluorescens.